The primary structure comprises 87 residues: MSERAERKTRIGKVTSNKMEKTVVVAVESRIQHPLYGRTVKKTKKFKAHDEENACQIGDVVEIMETRPLSKEKRWRVVRIVEKAVIV.

Belongs to the universal ribosomal protein uS17 family. Part of the 30S ribosomal subunit.

One of the primary rRNA binding proteins, it binds specifically to the 5'-end of 16S ribosomal RNA. The chain is Small ribosomal subunit protein uS17 from Heliobacterium modesticaldum (strain ATCC 51547 / Ice1).